We begin with the raw amino-acid sequence, 367 residues long: Cyclin-dependent kinase 5 activator 2 (367 aa).

Positions 1-11 are enriched in polar residues; sequence MGTVLSLSPAS. Disordered stretches follow at residues 1–56, 72–98, 131–175, and 329–367; these read MGTV…RLKR, ASAK…LVQQ, AAAT…GSPR, and GEAA…NLDR. Gly-2 carries N-myristoyl glycine lipidation. Over residues 74–84 the composition is skewed to basic residues; sequence AKKKKGSKKVT. Thr-84 is subject to Phosphothreonine. The segment covering 131-148 has biased composition (low complexity); sequence AAATCEPPSGGSAAAQPP. Pro residues predominate over residues 154-171; sequence KPPPPPPPAPQVAPPVPG. Positions 342 to 357 are enriched in low complexity; it reads GAPAASSAARDSCAAG.

It belongs to the cyclin-dependent kinase 5 activator family. As to quaternary structure, heterodimer of a catalytic subunit and a regulatory subunit. Post-translationally, myristoylated. The Gly-2-Ala mutant is absent of the cell periphery, suggesting that a proper myristoylation signal is essential for the proper distribution of CDK5R2 (p39). As to expression, brain and neuron specific.

It is found in the cell membrane. In terms of biological role, activator of CDK5/TPKII. This is Cyclin-dependent kinase 5 activator 2 (CDK5R2) from Homo sapiens (Human).